The sequence spans 283 residues: NAD(P)H-hydrate epimerase (283 aa).

The transit peptide at 1-28 (MLGVRALFGIGLLVTSRGGFVLTHTRAC) directs the protein to the mitochondrion. A YjeF N-terminal domain is found at 61–270 (AQQIDEELFS…VLEQKYQLNL (210 aa)). Position 115-119 (115-119 (NNGGD)) interacts with (6S)-NADPHX. K(+)-binding residues include asparagine 116 and aspartate 180. Residues 184–190 (GFSFKGA) and aspartate 213 each bind (6S)-NADPHX. Residue serine 216 participates in K(+) binding.

This sequence belongs to the NnrE/AIBP family. Homodimer. Interacts with apoa1a. Binds to high-density lipoprotein. K(+) serves as cofactor.

It localises to the mitochondrion. It is found in the secreted. It catalyses the reaction (6R)-NADHX = (6S)-NADHX. The catalysed reaction is (6R)-NADPHX = (6S)-NADPHX. Functionally, catalyzes the epimerization of the S- and R-forms of NAD(P)HX, a damaged form of NAD(P)H that is a result of enzymatic or heat-dependent hydration. This is a prerequisite for the S-specific NAD(P)H-hydrate dehydratase to allow the repair of both epimers of NAD(P)HX. This is NAD(P)H-hydrate epimerase from Danio rerio (Zebrafish).